Here is a 708-residue protein sequence, read N- to C-terminus: Leukotoxin translocation ATP-binding protein LktB (708 aa).

One can recognise a Peptidase C39 domain in the interval 1-126 (MEANHQRNDL…ACYQGQLILV (126 aa)). The region spanning 155 to 437 (FLETLIVSIF…LAQLWQDFQQ (283 aa)) is the ABC transmembrane type-1 domain. A run of 5 helical transmembrane segments spans residues 159–179 (LIVS…FQVV), 192–212 (LNII…LSGL), 270–290 (ALTS…MWYY), 296–316 (LVIL…SPIL), and 389–409 (VMVI…LSIG). Residues 469–704 (IAFKNIRFRY…SNGLYSYLHQ (236 aa)) enclose the ABC transporter domain. 503–510 (GRSGSGKS) is an ATP binding site.

It belongs to the ABC transporter superfamily. Protein-1 exporter (TC 3.A.1.109) family. In terms of assembly, homodimer.

It localises to the cell inner membrane. The enzyme catalyses ATP + H2O + proteinSide 1 = ADP + phosphate + proteinSide 2.. Functionally, part of the ABC transporter complex LktBD involved in leukotoxin export. Transmembrane domains (TMD) form a pore in the inner membrane and the ATP-binding domain (NBD) is responsible for energy generation. This is Leukotoxin translocation ATP-binding protein LktB (lktB) from Mannheimia glucosida.